The primary structure comprises 607 residues: UvrABC system protein C (607 aa).

In terms of domain architecture, GIY-YIG spans 11–89; it reads CKPGVYRFED…IKEFAPPCNV (79 aa). In terms of domain architecture, UVR spans 201–236; that stretch reads SSLLESLKKKMLKASKNKEYEEAAILRDKIQAAQTV.

The protein belongs to the UvrC family. In terms of assembly, interacts with UvrB in an incision complex.

The protein resides in the cytoplasm. The UvrABC repair system catalyzes the recognition and processing of DNA lesions. UvrC both incises the 5' and 3' sides of the lesion. The N-terminal half is responsible for the 3' incision and the C-terminal half is responsible for the 5' incision. This is UvrABC system protein C from Tropheryma whipplei (strain Twist) (Whipple's bacillus).